The following is a 353-amino-acid chain: Anthranilate phosphoribosyltransferase (353 aa).

5-phospho-alpha-D-ribose 1-diphosphate contacts are provided by residues Gly87, 90–91 (GD), Thr95, 97–100 (NIST), 115–123 (KHGNRAASS), and Thr127. Gly87 lines the anthranilate pocket. Ser99 lines the Mg(2+) pocket. Asn118 contributes to the anthranilate binding site. Anthranilate is bound at residue Arg173. Mg(2+)-binding residues include Asp231 and Glu232.

It belongs to the anthranilate phosphoribosyltransferase family. In terms of assembly, homodimer. Mg(2+) serves as cofactor.

The catalysed reaction is N-(5-phospho-beta-D-ribosyl)anthranilate + diphosphate = 5-phospho-alpha-D-ribose 1-diphosphate + anthranilate. The protein operates within amino-acid biosynthesis; L-tryptophan biosynthesis; L-tryptophan from chorismate: step 2/5. In terms of biological role, catalyzes the transfer of the phosphoribosyl group of 5-phosphorylribose-1-pyrophosphate (PRPP) to anthranilate to yield N-(5'-phosphoribosyl)-anthranilate (PRA). In Salinispora arenicola (strain CNS-205), this protein is Anthranilate phosphoribosyltransferase.